A 29-amino-acid polypeptide reads, in one-letter code: Cytochrome b6-f complex subunit 8 (29 aa).

Residues 3–23 (ILTLGWVSILALFTWSIAMVV) form a helical membrane-spanning segment.

This sequence belongs to the PetN family. The 4 large subunits of the cytochrome b6-f complex are cytochrome b6, subunit IV (17 kDa polypeptide, PetD), cytochrome f and the Rieske protein, while the 4 small subunits are PetG, PetL, PetM and PetN. The complex functions as a dimer.

It is found in the cellular thylakoid membrane. Its function is as follows. Component of the cytochrome b6-f complex, which mediates electron transfer between photosystem II (PSII) and photosystem I (PSI), cyclic electron flow around PSI, and state transitions. The protein is Cytochrome b6-f complex subunit 8 of Microcystis aeruginosa (strain NIES-843 / IAM M-2473).